Here is a 219-residue protein sequence, read N- to C-terminus: Deoxyribose-phosphate aldolase (219 aa).

Residue aspartate 93 is the Proton donor/acceptor of the active site. Residue lysine 154 is the Schiff-base intermediate with acetaldehyde of the active site. Lysine 179 serves as the catalytic Proton donor/acceptor.

The protein belongs to the DeoC/FbaB aldolase family. DeoC type 1 subfamily.

The protein localises to the cytoplasm. The enzyme catalyses 2-deoxy-D-ribose 5-phosphate = D-glyceraldehyde 3-phosphate + acetaldehyde. It participates in carbohydrate degradation; 2-deoxy-D-ribose 1-phosphate degradation; D-glyceraldehyde 3-phosphate and acetaldehyde from 2-deoxy-alpha-D-ribose 1-phosphate: step 2/2. Its function is as follows. Catalyzes a reversible aldol reaction between acetaldehyde and D-glyceraldehyde 3-phosphate to generate 2-deoxy-D-ribose 5-phosphate. This Haloquadratum walsbyi (strain DSM 16790 / HBSQ001) protein is Deoxyribose-phosphate aldolase.